Consider the following 187-residue polypeptide: Crossover junction endodeoxyribonuclease RuvC (187 aa).

Active-site residues include aspartate 7, glutamate 67, and aspartate 140. Mg(2+) contacts are provided by aspartate 7, glutamate 67, and aspartate 140.

The protein belongs to the RuvC family. In terms of assembly, homodimer which binds Holliday junction (HJ) DNA. The HJ becomes 2-fold symmetrical on binding to RuvC with unstacked arms; it has a different conformation from HJ DNA in complex with RuvA. In the full resolvosome a probable DNA-RuvA(4)-RuvB(12)-RuvC(2) complex forms which resolves the HJ. Mg(2+) serves as cofactor.

The protein resides in the cytoplasm. It catalyses the reaction Endonucleolytic cleavage at a junction such as a reciprocal single-stranded crossover between two homologous DNA duplexes (Holliday junction).. Functionally, the RuvA-RuvB-RuvC complex processes Holliday junction (HJ) DNA during genetic recombination and DNA repair. Endonuclease that resolves HJ intermediates. Cleaves cruciform DNA by making single-stranded nicks across the HJ at symmetrical positions within the homologous arms, yielding a 5'-phosphate and a 3'-hydroxyl group; requires a central core of homology in the junction. The consensus cleavage sequence is 5'-(A/T)TT(C/G)-3'. Cleavage occurs on the 3'-side of the TT dinucleotide at the point of strand exchange. HJ branch migration catalyzed by RuvA-RuvB allows RuvC to scan DNA until it finds its consensus sequence, where it cleaves and resolves the cruciform DNA. In Chlorobaculum parvum (strain DSM 263 / NCIMB 8327) (Chlorobium vibrioforme subsp. thiosulfatophilum), this protein is Crossover junction endodeoxyribonuclease RuvC.